Consider the following 319-residue polypeptide: Protoheme IX farnesyltransferase (319 aa).

Transmembrane regions (helical) follow at residues 59 to 79 (IGLI…AGAF), 108 to 128 (EALV…WFGA), 131 to 151 (LSAW…TIIL), 158 to 178 (NIVW…AAVT), 183 to 203 (WPAI…YWPL), 232 to 252 (VVLY…AGGA), 254 to 274 (WVYT…SHAL), and 299 to 319 (LTLL…VIGG).

It belongs to the UbiA prenyltransferase family. Protoheme IX farnesyltransferase subfamily.

Its subcellular location is the cell membrane. The catalysed reaction is heme b + (2E,6E)-farnesyl diphosphate + H2O = Fe(II)-heme o + diphosphate. It functions in the pathway porphyrin-containing compound metabolism; heme O biosynthesis; heme O from protoheme: step 1/1. Converts heme B (protoheme IX) to heme O by substitution of the vinyl group on carbon 2 of heme B porphyrin ring with a hydroxyethyl farnesyl side group. This chain is Protoheme IX farnesyltransferase, found in Pseudarthrobacter chlorophenolicus (strain ATCC 700700 / DSM 12829 / CIP 107037 / JCM 12360 / KCTC 9906 / NCIMB 13794 / A6) (Arthrobacter chlorophenolicus).